A 226-amino-acid chain; its full sequence is MKIKKHKFPGVYVFIDEDGSEKIATKNLVPGQKVYGERLIKFEGEEYRVWNPRRSKLGAAILNGLKHFPIKPGSTVLYLGVASGTTASHVSDIVGWEGKVFGVEFSPRVLRELVPIVEERRNIVPILGDATKPEGYRALVPKVDVIFEDVAQPTQAKILIDNAKVFLKSGGYGMISVKSRSIDVTKEPEQVFKEVEKELATYFEVVERLSLEPYEKDHALFVVRKP.

Residues 85 to 86 (TT), 104 to 105 (EF), 129 to 130 (DA), and 149 to 152 (DVAQ) each bind S-adenosyl-L-methionine.

It belongs to the methyltransferase superfamily. Fibrillarin family. In terms of assembly, interacts with nop5. Component of box C/D small ribonucleoprotein (sRNP) particles that contain rpl7ae, FlpA and nop5, plus a guide RNA.

Involved in pre-rRNA and tRNA processing. Utilizes the methyl donor S-adenosyl-L-methionine to catalyze the site-specific 2'-hydroxyl methylation of ribose moieties in rRNA and tRNA. Site specificity is provided by a guide RNA that base pairs with the substrate. Methylation occurs at a characteristic distance from the sequence involved in base pairing with the guide RNA. This chain is Fibrillarin-like rRNA/tRNA 2'-O-methyltransferase, found in Thermococcus onnurineus (strain NA1).